The following is an 81-amino-acid chain: NAD(P)H-quinone oxidoreductase subunit O (81 aa).

This sequence belongs to the complex I NdhO subunit family. As to quaternary structure, NDH-1 can be composed of about 15 different subunits; different subcomplexes with different compositions have been identified which probably have different functions.

The protein resides in the cellular thylakoid membrane. It carries out the reaction a plastoquinone + NADH + (n+1) H(+)(in) = a plastoquinol + NAD(+) + n H(+)(out). The enzyme catalyses a plastoquinone + NADPH + (n+1) H(+)(in) = a plastoquinol + NADP(+) + n H(+)(out). In terms of biological role, NDH-1 shuttles electrons from an unknown electron donor, via FMN and iron-sulfur (Fe-S) centers, to quinones in the respiratory and/or the photosynthetic chain. The immediate electron acceptor for the enzyme in this species is believed to be plastoquinone. Couples the redox reaction to proton translocation, and thus conserves the redox energy in a proton gradient. Cyanobacterial NDH-1 also plays a role in inorganic carbon-concentration. The protein is NAD(P)H-quinone oxidoreductase subunit O of Prochlorococcus marinus (strain MIT 9303).